The chain runs to 139 residues: D-ribose pyranase (139 aa).

The active-site Proton donor is the H20. Residues D28, H106, and 128–130 (YAN) each bind substrate.

Belongs to the RbsD / FucU family. RbsD subfamily. Homodecamer.

It localises to the cytoplasm. The enzyme catalyses beta-D-ribopyranose = beta-D-ribofuranose. It participates in carbohydrate metabolism; D-ribose degradation; D-ribose 5-phosphate from beta-D-ribopyranose: step 1/2. Catalyzes the interconversion of beta-pyran and beta-furan forms of D-ribose. The protein is D-ribose pyranase of Escherichia coli O139:H28 (strain E24377A / ETEC).